The chain runs to 84 residues: Hepcidin (84 aa).

The N-terminal stretch at 1-24 (MALSSQIWAACLLLLLLLASLTSG) is a signal peptide. The propeptide occupies 25–54 (SVFPQQTGQLAELQPQDRAGARAGWTPMLQ). Disulfide bonds link C69/C72, C70/C78, and C73/C81.

This sequence belongs to the hepcidin family. As to quaternary structure, interacts with SLC40A1; this interaction promotes SLC40A1 rapid ubiquitination.

Its subcellular location is the secreted. Functionally, liver-produced hormone that constitutes the main circulating regulator of iron absorption and distribution across tissues. Acts by promoting endocytosis and degradation of ferroportin/SLC40A1, leading to the retention of iron in iron-exporting cells and decreased flow of iron into plasma. Controls the major flows of iron into plasma: absorption of dietary iron in the intestine, recycling of iron by macrophages, which phagocytose old erythrocytes and other cells, and mobilization of stored iron from hepatocytes. Has strong antimicrobial activity against E.coli ML35P N.cinerea and weaker against S.epidermidis, S.aureus and group b streptococcus bacteria. Active against the fungus C.albicans. No activity against P.aeruginosa. In Pongo abelii (Sumatran orangutan), this protein is Hepcidin (HAMP).